Consider the following 106-residue polypeptide: UPF0060 membrane protein Rleg2_1018 (106 aa).

A run of 4 helical transmembrane segments spans residues 4-24, 30-50, 58-78, and 86-106; these read IIYA…WAWL, VWWL…LTLV, TFAA…WLVE, and DIGG…GPRG.

The protein belongs to the UPF0060 family.

Its subcellular location is the cell inner membrane. This is UPF0060 membrane protein Rleg2_1018 from Rhizobium leguminosarum bv. trifolii (strain WSM2304).